Here is a 356-residue protein sequence, read N- to C-terminus: DNA polymerase IV (356 aa).

In terms of domain architecture, UmuC spans 7-188; it reads IIHIDMDAFY…IPVTKFYGVG (182 aa). Mg(2+)-binding residues include Asp11 and Asp106. The active site involves Glu107.

Belongs to the DNA polymerase type-Y family. Monomer. The cofactor is Mg(2+).

Its subcellular location is the cytoplasm. It carries out the reaction DNA(n) + a 2'-deoxyribonucleoside 5'-triphosphate = DNA(n+1) + diphosphate. Poorly processive, error-prone DNA polymerase involved in untargeted mutagenesis. Copies undamaged DNA at stalled replication forks, which arise in vivo from mismatched or misaligned primer ends. These misaligned primers can be extended by PolIV. Exhibits no 3'-5' exonuclease (proofreading) activity. May be involved in translesional synthesis, in conjunction with the beta clamp from PolIII. The polypeptide is DNA polymerase IV (Listeria monocytogenes serotype 4b (strain CLIP80459)).